The sequence spans 144 residues: Small ribosomal subunit protein uS19 (144 aa).

The protein belongs to the universal ribosomal protein uS19 family.

The chain is Small ribosomal subunit protein uS19 (rps15) from Dictyostelium discoideum (Social amoeba).